The sequence spans 194 residues: Small ribosomal subunit protein uS5 (194 aa).

The S5 DRBM domain occupies 26–89 (LEEKVVEIRR…ADAKKRIIKV (64 aa)).

This sequence belongs to the universal ribosomal protein uS5 family. As to quaternary structure, part of the 30S ribosomal subunit. Contacts proteins S4 and S8.

With S4 and S12 plays an important role in translational accuracy. Its function is as follows. Located at the back of the 30S subunit body where it stabilizes the conformation of the head with respect to the body. The protein is Small ribosomal subunit protein uS5 of Sulfurihydrogenibium sp. (strain YO3AOP1).